We begin with the raw amino-acid sequence, 309 residues long: Elongation factor Ts (309 aa).

Residues 80–83 form an involved in Mg(2+) ion dislocation from EF-Tu region; that stretch reads TDFV.

This sequence belongs to the EF-Ts family.

It is found in the cytoplasm. Associates with the EF-Tu.GDP complex and induces the exchange of GDP to GTP. It remains bound to the aminoacyl-tRNA.EF-Tu.GTP complex up to the GTP hydrolysis stage on the ribosome. This chain is Elongation factor Ts, found in Rhodospirillum rubrum (strain ATCC 11170 / ATH 1.1.1 / DSM 467 / LMG 4362 / NCIMB 8255 / S1).